Here is a 238-residue protein sequence, read N- to C-terminus: Probable transcriptional regulatory protein VV2_1184 (238 aa).

This sequence belongs to the TACO1 family.

The protein localises to the cytoplasm. The protein is Probable transcriptional regulatory protein VV2_1184 of Vibrio vulnificus (strain CMCP6).